Here is a 437-residue protein sequence, read N- to C-terminus: Phosphoglucosamine mutase (437 aa).

The Phosphoserine intermediate role is filled by S101. S101, D234, D236, and D238 together coordinate Mg(2+). The residue at position 101 (S101) is a Phosphoserine.

This sequence belongs to the phosphohexose mutase family. Mg(2+) serves as cofactor. In terms of processing, activated by phosphorylation.

The enzyme catalyses alpha-D-glucosamine 1-phosphate = D-glucosamine 6-phosphate. Functionally, catalyzes the conversion of glucosamine-6-phosphate to glucosamine-1-phosphate. In Thermus thermophilus (strain ATCC 27634 / DSM 579 / HB8), this protein is Phosphoglucosamine mutase.